We begin with the raw amino-acid sequence, 240 residues long: Probable transcriptional regulatory protein OEOE_0768 (240 aa).

The segment at 1 to 21 is disordered; the sequence is MSGHSKWHNIQGRKNAQDAKR.

The protein belongs to the TACO1 family.

Its subcellular location is the cytoplasm. In Oenococcus oeni (strain ATCC BAA-331 / PSU-1), this protein is Probable transcriptional regulatory protein OEOE_0768.